A 478-amino-acid chain; its full sequence is Catalase (478 aa).

Residues 1–23 are disordered; the sequence is MTNQLTTNEGQPWADNQHSQTAG. Active-site residues include H53 and N126. Y336 serves as a coordination point for heme.

Belongs to the catalase family. The cofactor is heme.

Its subcellular location is the cytoplasm. It catalyses the reaction 2 H2O2 = O2 + 2 H2O. Functionally, decomposes hydrogen peroxide into water and oxygen; serves to protect cells from the toxic effects of hydrogen peroxide. The chain is Catalase (katA) from Latilactobacillus sakei (Lactobacillus sakei).